Consider the following 523-residue polypeptide: Protein nucleotidyltransferase YdiU (523 aa).

8 residues coordinate ATP: Gly-101, Gly-103, Arg-104, Lys-128, Asp-140, Gly-141, Arg-198, and Arg-205. Catalysis depends on Asp-275, which acts as the Proton acceptor. Residues Asn-276 and Asp-285 each contribute to the Mg(2+) site. Asp-285 contributes to the ATP binding site.

Belongs to the SELO family. The cofactor is Mg(2+). Requires Mn(2+) as cofactor.

The catalysed reaction is L-seryl-[protein] + ATP = 3-O-(5'-adenylyl)-L-seryl-[protein] + diphosphate. It carries out the reaction L-threonyl-[protein] + ATP = 3-O-(5'-adenylyl)-L-threonyl-[protein] + diphosphate. It catalyses the reaction L-tyrosyl-[protein] + ATP = O-(5'-adenylyl)-L-tyrosyl-[protein] + diphosphate. The enzyme catalyses L-histidyl-[protein] + UTP = N(tele)-(5'-uridylyl)-L-histidyl-[protein] + diphosphate. The catalysed reaction is L-seryl-[protein] + UTP = O-(5'-uridylyl)-L-seryl-[protein] + diphosphate. It carries out the reaction L-tyrosyl-[protein] + UTP = O-(5'-uridylyl)-L-tyrosyl-[protein] + diphosphate. Functionally, nucleotidyltransferase involved in the post-translational modification of proteins. It can catalyze the addition of adenosine monophosphate (AMP) or uridine monophosphate (UMP) to a protein, resulting in modifications known as AMPylation and UMPylation. This is Protein nucleotidyltransferase YdiU from Aromatoleum aromaticum (strain DSM 19018 / LMG 30748 / EbN1) (Azoarcus sp. (strain EbN1)).